We begin with the raw amino-acid sequence, 448 residues long: Phosphoglucosamine mutase (448 aa).

Ser-100 functions as the Phosphoserine intermediate in the catalytic mechanism. Mg(2+) is bound by residues Ser-100, Asp-240, Asp-242, and Asp-244. Ser-100 is subject to Phosphoserine.

Belongs to the phosphohexose mutase family. Mg(2+) is required as a cofactor. Activated by phosphorylation.

It catalyses the reaction alpha-D-glucosamine 1-phosphate = D-glucosamine 6-phosphate. Catalyzes the conversion of glucosamine-6-phosphate to glucosamine-1-phosphate. In Clostridioides difficile (strain 630) (Peptoclostridium difficile), this protein is Phosphoglucosamine mutase.